The sequence spans 375 residues: CMP-N-acetylneuraminate-beta-1,4-galactoside alpha-2,3-sialyltransferase (375 aa).

The Cytoplasmic portion of the chain corresponds to 1-8; it reads MGLLVFVR. A helical; Signal-anchor for type II membrane protein transmembrane segment spans residues 9 to 28; the sequence is NLLLALCLFLVLGFLYYSAW. The Lumenal segment spans residues 29 to 375; sequence KLHLLQWEED…RVITDLSSGI (347 aa). N-linked (GlcNAc...) asparagine glycans are attached at residues Asn-80 and Asn-171. Cys-160 and Cys-314 are disulfide-bonded.

This sequence belongs to the glycosyltransferase 29 family. The soluble form derives from the membrane form by proteolytic processing. As to expression, highly expressed in adult skeletal muscle and in all fetal tissues examined and to a much lesser extent in placenta, lung and liver.

The protein localises to the golgi apparatus. Its subcellular location is the golgi stack membrane. The protein resides in the secreted. The catalysed reaction is a beta-D-galactosyl-(1-&gt;4)-N-acetyl-beta-D-glucosaminyl derivative + CMP-N-acetyl-beta-neuraminate = an N-acetyl-alpha-neuraminyl-(2-&gt;3)-beta-D-galactosyl-(1-&gt;4)-N-acetyl-beta-D-glucosaminyl derivative + CMP + H(+). Its pathway is protein modification; protein glycosylation. Its function is as follows. Catalyzes the formation of the NeuAc-alpha-2,3-Gal-beta-1,4-GlcNAc-, NeuAc-alpha-2,3-Gal-beta-1,3-GlcNAc- and NeuAc-alpha-2,3-Gal-beta-1,3-GalNAc- sequences found in terminal carbohydrate groups of glycoproteins and glycolipids. The highest activity is toward Gal-beta-1,3-GlcNAc and the lowest toward Gal-beta-1,3-GalNAc. The polypeptide is CMP-N-acetylneuraminate-beta-1,4-galactoside alpha-2,3-sialyltransferase (ST3GAL3) (Homo sapiens (Human)).